Consider the following 112-residue polypeptide: Ribonuclease P protein component (112 aa).

The protein belongs to the RnpA family. In terms of assembly, consists of a catalytic RNA component (M1 or rnpB) and a protein subunit.

The enzyme catalyses Endonucleolytic cleavage of RNA, removing 5'-extranucleotides from tRNA precursor.. Functionally, RNaseP catalyzes the removal of the 5'-leader sequence from pre-tRNA to produce the mature 5'-terminus. It can also cleave other RNA substrates such as 4.5S RNA. The protein component plays an auxiliary but essential role in vivo by binding to the 5'-leader sequence and broadening the substrate specificity of the ribozyme. This is Ribonuclease P protein component from Clostridium kluyveri (strain ATCC 8527 / DSM 555 / NBRC 12016 / NCIMB 10680 / K1).